A 140-amino-acid polypeptide reads, in one-letter code: Mite allergen Der p 21.0101 (140 aa).

The N-terminal stretch at methionine 1–glycine 19 is a signal peptide. Immunodominant conformational IgE-binding epitope regions lie at residues phenylalanine 20–leucine 53 and tyrosine 108–tyrosine 140.

Belongs to the mite group 5 allergen family. As to quaternary structure, monomer. Homodimer. Expressed in the epithelium, lumen and microvilli of the midgut, and in feces.

It is found in the cytoplasm. Its subcellular location is the endoplasmic reticulum. The protein resides in the vesicle. The protein localises to the secreted. The protein is Mite allergen Der p 21.0101 of Dermatophagoides pteronyssinus (European house dust mite).